A 280-amino-acid chain; its full sequence is Beta-glucosyl-HMC-alpha-glucosyl-transferase (280 aa).

Its pathway is genetic information processing; DNA modification. Functionally, transfers a gentiobiosyl-group on a hydroxymethylcytosine residue in DNA. Is involved in a DNA modification process to protects the phage genome against its own nucleases and the host restriction endonuclease system. In Enterobacteria phage T6 (Bacteriophage T6), this protein is Beta-glucosyl-HMC-alpha-glucosyl-transferase.